Reading from the N-terminus, the 415-residue chain is ATP-dependent RNA helicase RhlB (415 aa).

The short motif at 9 to 37 (QRFSDLSLHPIVRDTLAKKGFDFCTPIQA) is the Q motif element. The region spanning 40–218 (LPISLNGRDV…FEDMNDPEYI (179 aa)) is the Helicase ATP-binding domain. Position 53-60 (53-60 (AQTGTGKT)) interacts with ATP. Residues 164-167 (DEAD) carry the DEAD box motif. One can recognise a Helicase C-terminal domain in the interval 241-389 (DKMALLLTLM…VSQYETEALL (149 aa)).

This sequence belongs to the DEAD box helicase family. RhlB subfamily. In terms of assembly, component of the RNA degradosome, which is a multiprotein complex involved in RNA processing and mRNA degradation.

The protein resides in the cytoplasm. It catalyses the reaction ATP + H2O = ADP + phosphate + H(+). Its function is as follows. DEAD-box RNA helicase involved in RNA degradation. Has RNA-dependent ATPase activity and unwinds double-stranded RNA. The polypeptide is ATP-dependent RNA helicase RhlB (Haemophilus influenzae (strain PittEE)).